An 844-amino-acid polypeptide reads, in one-letter code: 3',5'-cyclic-AMP phosphodiesterase 4A (844 aa).

Residues 1-124 (MEPPAAPSER…RSPLDSQASP (124 aa)) are disordered. Position 13 is a phosphoserine (S13). Residues 36-46 (QPRTPIRIQQR) are compositionally biased toward low complexity. Basic and acidic residues predominate over residues 51-78 (SAERSEPERSPHRPIERADAVDTGDRPG). Residues 82-91 (TRMSWPSSFH) show a composition bias toward polar residues. 5 positions are modified to phosphoserine: S147, S152, S160, S204, and S333. The PDEase domain occupies 343–672 (VKTDQEDLLA…DWYHSAIRQS (330 aa)). K344 is covalently cross-linked (Glycyl lysine isopeptide (Lys-Gly) (interchain with G-Cter in SUMO)). The active-site Proton donor is the H419. H419 is a binding site for 3',5'-cyclic AMP. Residues H419 and H423 each contribute to the AMP site. 4 residues coordinate Zn(2+): H423, H459, D460, and D577. AMP-binding residues include D460, D577, Q628, and F631. D460 is a Mg(2+) binding site. Residue D460 coordinates Mn(2+). 3',5'-cyclic AMP is bound by residues Q628 and F631. Phosphoserine is present on residues S672 and S674. The disordered stretch occupies residues 819–844 (ACSGTSGDNSAVISAPGRWGSGGDPA). Residues 820-830 (CSGTSGDNSAV) are compositionally biased toward polar residues.

Belongs to the cyclic nucleotide phosphodiesterase family. PDE4 subfamily. Interacts with LYN (via SH3 domain). Interacts with ARRB2. Zn(2+) is required as a cofactor. Mg(2+) serves as cofactor. The cofactor is Mn(2+). In terms of processing, proteolytically cleaved by CASP3.

It is found in the cytoplasm. The protein localises to the cytosol. It localises to the membrane. It catalyses the reaction 3',5'-cyclic AMP + H2O = AMP + H(+). It participates in purine metabolism; 3',5'-cyclic AMP degradation; AMP from 3',5'-cyclic AMP: step 1/1. Its activity is regulated as follows. Inhibited by rolipram and diazepam. In terms of biological role, hydrolyzes the second messenger 3',5'-cyclic AMP (cAMP), which is a key regulator of many important physiological processes. Efficiently hydrolyzes cAMP. This is 3',5'-cyclic-AMP phosphodiesterase 4A (Pde4a) from Mus musculus (Mouse).